The chain runs to 240 residues: Uridylate kinase (240 aa).

13–16 (KASG) contributes to the ATP binding site. Residues 21-26 (GAQGFG) form an involved in allosteric activation by GTP region. Gly55 is a UMP binding site. 2 residues coordinate ATP: Gly56 and Arg60. UMP contacts are provided by residues Asp75 and 136–143 (TGNPFFTT). Residues Thr163, Gln164, Tyr169, and Asp172 each contribute to the ATP site.

It belongs to the UMP kinase family. Homohexamer.

It localises to the cytoplasm. The enzyme catalyses UMP + ATP = UDP + ADP. It functions in the pathway pyrimidine metabolism; CTP biosynthesis via de novo pathway; UDP from UMP (UMPK route): step 1/1. Allosterically activated by GTP. Inhibited by UTP. Its function is as follows. Catalyzes the reversible phosphorylation of UMP to UDP. The chain is Uridylate kinase from Rhizobium etli (strain ATCC 51251 / DSM 11541 / JCM 21823 / NBRC 15573 / CFN 42).